Here is a 165-residue protein sequence, read N- to C-terminus: MTKSKSGLSFLWLSAVTFLLDLSSKYFVVKNFELYESINILPVFNLTYVRNYGAAFSFLADHDGWQKYFFIVLAIAISLMLCYFLAKNQATQKLQNIAYALIIGGALGNMIDRLYHGFVVDFFDFYWDIYHYPVFNVADIAISLGAGLMILDAFKNRHEPEQRTE.

3 consecutive transmembrane segments (helical) span residues 9–29 (SFLW…YFVV), 65–85 (WQKY…CYFL), and 100–120 (ALII…GFVV). Active-site residues include Asp-121 and Asp-139. The helical transmembrane segment at 134-154 (VFNVADIAISLGAGLMILDAF) threads the bilayer.

The protein belongs to the peptidase A8 family.

Its subcellular location is the cell inner membrane. It catalyses the reaction Release of signal peptides from bacterial membrane prolipoproteins. Hydrolyzes -Xaa-Yaa-Zaa-|-(S,diacylglyceryl)Cys-, in which Xaa is hydrophobic (preferably Leu), and Yaa (Ala or Ser) and Zaa (Gly or Ala) have small, neutral side chains.. It functions in the pathway protein modification; lipoprotein biosynthesis (signal peptide cleavage). In terms of biological role, this protein specifically catalyzes the removal of signal peptides from prolipoproteins. This chain is Lipoprotein signal peptidase, found in Pasteurella multocida (strain Pm70).